Reading from the N-terminus, the 762-residue chain is cGMP-dependent protein kinase 2 (762 aa).

The interval 1–25 is disordered; that stretch reads MGNGSVKPKHSKHPDGHSGNLTTDA. A lipid anchor (N-myristoyl glycine) is attached at Gly2. A coiled-coil region spans residues 23 to 85; the sequence is TDALRNKVTE…CIQLNKLQDV (63 aa). Ser110 and Ser117 each carry phosphoserine. A disordered region spans residues 117 to 138; it reads SRRGAKAGVSAEPTTRTYDLNK. Residues 168-283 form a cGMP-binding, high affinity; cAMP-binding, moderate affinity region; it reads FLKRLDPQQI…DEQYRNFLRS (116 aa). Residues 232-235 and 242-243 each bind 3',5'-cyclic AMP; these read GELA and RT. Residues 232 to 235, 242 to 243, Lys347, 356 to 359, 366 to 367, Asp412, and Arg415 each bind 3',5'-cyclic GMP; these read GELA, RT, GEKA, and RS. The tract at residues 286 to 416 is cGMP-binding, high affinity; cAMP-binding, low affinity; that stretch reads LLKNLPEDKL…NLNRDDEKRH (131 aa). A Phosphoserine modification is found at Ser431. One can recognise a Protein kinase domain in the interval 453 to 711; that stretch reads LEIIATLGVG…INDIKKHRWL (259 aa). Residues 459 to 467 and Lys482 each bind ATP; that span reads LGVGGFGRV. Asp576 acts as the Proton acceptor in catalysis. The residue at position 609 (Thr609) is a Phosphothreonine. Residues 712–762 enclose the AGC-kinase C-terminal domain; the sequence is NGFNWEGLKARSLPSPLQRELKGPIDHSYFDKYPPEKGMPPDELSGWDKDF. The interval 740–762 is disordered; sequence YFDKYPPEKGMPPDELSGWDKDF.

It belongs to the protein kinase superfamily. AGC Ser/Thr protein kinase family. cGMP subfamily. Interacts with GRIA1/GLUR1. Post-translationally, myristoylation mediates membrane localization. As to expression, highly concentrated in brain, lung and intestinal mucosa.

The protein resides in the apical cell membrane. The catalysed reaction is L-seryl-[protein] + ATP = O-phospho-L-seryl-[protein] + ADP + H(+). It catalyses the reaction L-threonyl-[protein] + ATP = O-phospho-L-threonyl-[protein] + ADP + H(+). Binding of cGMP results in enzyme activation. In terms of biological role, crucial regulator of intestinal secretion and bone growth. Phosphorylates and activates CFTR on the plasma membrane. Plays a key role in intestinal secretion by regulating cGMP-dependent translocation of CFTR in jejunum. Acts downstream of NMDAR to activate the plasma membrane accumulation of GRIA1/GLUR1 in synapse and increase synaptic plasticity. Phosphorylates GRIA1/GLUR1 at Ser-863. Acts as a regulator of gene expression and activator of the extracellular signal-regulated kinases MAPK3/ERK1 and MAPK1/ERK2 in mechanically stimulated osteoblasts. Under fluid shear stress, mediates ERK activation and subsequent induction of FOS, FOSL1/FRA1, FOSL2/FRA2 and FOSB that play a key role in the osteoblast anabolic response to mechanical stimulation. The sequence is that of cGMP-dependent protein kinase 2 (PRKG2) from Homo sapiens (Human).